A 453-amino-acid polypeptide reads, in one-letter code: Phosphoglucosamine mutase (453 aa).

Serine 108 acts as the Phosphoserine intermediate in catalysis. Residues serine 108, aspartate 247, aspartate 249, and aspartate 251 each contribute to the Mg(2+) site. Serine 108 bears the Phosphoserine mark.

The protein belongs to the phosphohexose mutase family. Mg(2+) serves as cofactor. Post-translationally, activated by phosphorylation.

It carries out the reaction alpha-D-glucosamine 1-phosphate = D-glucosamine 6-phosphate. Catalyzes the conversion of glucosamine-6-phosphate to glucosamine-1-phosphate. The chain is Phosphoglucosamine mutase from Methylobacillus flagellatus (strain ATCC 51484 / DSM 6875 / VKM B-1610 / KT).